A 338-amino-acid polypeptide reads, in one-letter code: tRNA-cytidine(32) 2-sulfurtransferase (338 aa).

The PP-loop motif motif lies at 86-91 (SGGKDS). Positions 161, 164, and 252 each coordinate [4Fe-4S] cluster.

This sequence belongs to the TtcA family. Homodimer. It depends on Mg(2+) as a cofactor. [4Fe-4S] cluster is required as a cofactor.

Its subcellular location is the cytoplasm. It catalyses the reaction cytidine(32) in tRNA + S-sulfanyl-L-cysteinyl-[cysteine desulfurase] + AH2 + ATP = 2-thiocytidine(32) in tRNA + L-cysteinyl-[cysteine desulfurase] + A + AMP + diphosphate + H(+). The protein operates within tRNA modification. In terms of biological role, catalyzes the ATP-dependent 2-thiolation of cytidine in position 32 of tRNA, to form 2-thiocytidine (s(2)C32). The sulfur atoms are provided by the cysteine/cysteine desulfurase (IscS) system. This is tRNA-cytidine(32) 2-sulfurtransferase from Albidiferax ferrireducens (strain ATCC BAA-621 / DSM 15236 / T118) (Rhodoferax ferrireducens).